We begin with the raw amino-acid sequence, 248 residues long: UPF0246 protein lp_0089 (248 aa).

It belongs to the UPF0246 family.

This chain is UPF0246 protein lp_0089, found in Lactiplantibacillus plantarum (strain ATCC BAA-793 / NCIMB 8826 / WCFS1) (Lactobacillus plantarum).